Reading from the N-terminus, the 34-residue chain is Papillosin (34 aa).

In terms of biological role, has strong antibacterial activity against the Gram-positive bacteria M.luteus, S.aureus, B.megaterium, A.viridans and E.faecalis, and against the Gram-negative bacteria K.pneumoniae, E.coli DH5alpha, S.typhimurium, P.aeruginosa and E.aerogenes. Lacks hemolytic activity against sheep erythrocytes. The chain is Papillosin from Halocynthia papillosa (Red sea-squirt).